Here is a 363-residue protein sequence, read N- to C-terminus: Uptake hydrogenase small subunit (363 aa).

Residues 1 to 43 (MIETFYEVMRRQGISRRSFLKYCSLTATSLGLSPVFVPKIVHA) constitute a signal peptide (tat-type signal). Residues cysteine 60, cysteine 63, cysteine 158, cysteine 192, histidine 230, cysteine 233, cysteine 258, and cysteine 264 each coordinate [4Fe-4S] cluster. The [3Fe-4S] cluster site is built by cysteine 273, cysteine 292, and cysteine 295.

Belongs to the [NiFe]/[NiFeSe] hydrogenase small subunit family. In terms of assembly, heterodimer of a large and a small subunit. Requires [4Fe-4S] cluster as cofactor. It depends on [3Fe-4S] cluster as a cofactor. Predicted to be exported by the Tat system. The position of the signal peptide cleavage has not been experimentally proven.

The protein localises to the cell membrane. The catalysed reaction is H2 + A = AH2. Its function is as follows. This enzyme recycles the H(2) produced by nitrogenase to increase the production of ATP and to protect nitrogenase against inhibition or damage by O(2) under carbon- or phosphate-limited conditions. This is Uptake hydrogenase small subunit (hupS) from Alcaligenes hydrogenophilus.